Here is a 262-residue protein sequence, read N- to C-terminus: Abhydrolase domain-containing protein ACTT2-1 (262 aa).

The Peroxisomal targeting signal type 1 motif lies at 260 to 262; that stretch reads SKL.

The protein belongs to the AB hydrolase superfamily. AKT2 hydrolase family.

Its subcellular location is the peroxisome. It participates in mycotoxin biosynthesis. In terms of biological role, abhydrolase domain-containing protein; part of the gene clusters that mediate the biosynthesis of the host-selective toxins (HSTs) ACT-toxins responsible for brown spot of tangerine disease by the tangerine pathotype which affects tangerines and mandarins. ACT-toxins consist of three moieties, 9,10-epoxy-8-hydroxy-9-methyl-decatrienoic acid (EDA), valine and a polyketide. ACT-toxin I is toxic to both citrus and pear; toxin II the 5''-deoxy derivative of ACT-toxin I, is highly toxic to pear and slightly toxic to citrus. On cellular level, ACT-toxins affect plasma membrane of susceptible cells and cause a sudden increase in loss of K(+) after a few minutes of toxin treatment. The acyl-CoA ligase ACTT1, the hydrolase ACTT2, the enoyl-CoA hydratases ACTT3 and ACTT6, and the acyl-CoA synthetase ACTT5 are all involved in the biosynthesis of the AK-, AF- and ACT-toxin common 9,10-epoxy-8-hydroxy-9-methyl-decatrienoic acid (EDA) structural moiety. The exact role of each enzyme, and of additional enzymes identified within the AF-toxin clusters have still to be determined. On the other hand, ACTTS1 to ACTTS4 are specific to the tangerine pathotype. The function of ACTTS3 is to elongate the polyketide chain portion of ACT-toxin that is unique to this toxin. The enoyl-reductase ACTTS2 might complement the missing enoyl-reductase (ER) domain in ACTTS3 in the synthesis of the polyketide portion of ACT-toxin. The roles of the nonribosomal peptide synthetases-related proteins ACTTS1 and ACTTS4 have also still not been elucidated. The polypeptide is Abhydrolase domain-containing protein ACTT2-1 (Alternaria alternata (Alternaria rot fungus)).